Reading from the N-terminus, the 132-residue chain is Small ribosomal subunit protein uS11 (132 aa).

Belongs to the universal ribosomal protein uS11 family. In terms of assembly, part of the 30S ribosomal subunit. Interacts with proteins S7 and S18. Binds to IF-3.

Located on the platform of the 30S subunit, it bridges several disparate RNA helices of the 16S rRNA. Forms part of the Shine-Dalgarno cleft in the 70S ribosome. This is Small ribosomal subunit protein uS11 from Chlamydia muridarum (strain MoPn / Nigg).